Consider the following 217-residue polypeptide: Non-structural protein NS3 (217 aa).

This sequence belongs to the orbivirus NS3 family.

Its function is as follows. May play a role in the release of virions from infected cells. The protein is Non-structural protein NS3 (Segment-10) of Camelus dromedarius (Dromedary).